Reading from the N-terminus, the 419-residue chain is Glutamyl-tRNA reductase (419 aa).

Residues 49 to 52, Ser107, 112 to 114, and Gln118 contribute to the substrate site; these read TCNR and EPQ. The active-site Nucleophile is Cys50. An NADP(+)-binding site is contributed by 187 to 192; the sequence is GAGETI.

It belongs to the glutamyl-tRNA reductase family. Homodimer.

The enzyme catalyses (S)-4-amino-5-oxopentanoate + tRNA(Glu) + NADP(+) = L-glutamyl-tRNA(Glu) + NADPH + H(+). Its pathway is porphyrin-containing compound metabolism; protoporphyrin-IX biosynthesis; 5-aminolevulinate from L-glutamyl-tRNA(Glu): step 1/2. In terms of biological role, catalyzes the NADPH-dependent reduction of glutamyl-tRNA(Glu) to glutamate 1-semialdehyde (GSA). The chain is Glutamyl-tRNA reductase from Vibrio atlanticus (strain LGP32) (Vibrio splendidus (strain Mel32)).